The sequence spans 66 residues: Conotoxin Lt3.5 (66 aa).

Positions 1–20 (MMSKLGALLTICLLLFPLTA) are cleaved as a signal peptide. Residues 21–53 (VPLDGDQPLDRHAERMHDGISPKRHPWFDPVKR) constitute a propeptide that is removed on maturation. Disulfide bonds link Cys54–Cys66, Cys55–Cys62, and Cys59–Cys65. At Pro64 the chain carries 4-hydroxyproline.

This sequence belongs to the conotoxin M superfamily. In terms of tissue distribution, expressed by the venom duct.

It localises to the secreted. The sequence is that of Conotoxin Lt3.5 from Conus litteratus (Lettered cone).